Here is an 84-residue protein sequence, read N- to C-terminus: Exodeoxyribonuclease 7 small subunit (84 aa).

Belongs to the XseB family. In terms of assembly, heterooligomer composed of large and small subunits.

The protein localises to the cytoplasm. It carries out the reaction Exonucleolytic cleavage in either 5'- to 3'- or 3'- to 5'-direction to yield nucleoside 5'-phosphates.. Bidirectionally degrades single-stranded DNA into large acid-insoluble oligonucleotides, which are then degraded further into small acid-soluble oligonucleotides. This Azoarcus sp. (strain BH72) protein is Exodeoxyribonuclease 7 small subunit.